The chain runs to 102 residues: Large ribosomal subunit protein uL24 (102 aa).

It belongs to the universal ribosomal protein uL24 family. As to quaternary structure, part of the 50S ribosomal subunit.

Its function is as follows. One of two assembly initiator proteins, it binds directly to the 5'-end of the 23S rRNA, where it nucleates assembly of the 50S subunit. Functionally, one of the proteins that surrounds the polypeptide exit tunnel on the outside of the subunit. The polypeptide is Large ribosomal subunit protein uL24 (Paraburkholderia phytofirmans (strain DSM 17436 / LMG 22146 / PsJN) (Burkholderia phytofirmans)).